Here is a 256-residue protein sequence, read N- to C-terminus: NAD-dependent protein deacetylase (256 aa).

Positions 1–254 constitute a Deacetylase sirtuin-type domain; the sequence is MDISYHEKIS…KDILDVIKSE (254 aa). Ala28, Thr32, Phe39, Arg40, Gln105, Ile107, Asp108, and His123 together coordinate NAD(+). Phe39 contacts nicotinamide. 2 residues coordinate nicotinamide: Ile107 and Asp108. Residue His123 is the Proton acceptor of the active site. The Zn(2+) site is built by Cys131, Cys134, Cys156, and Cys159. NAD(+) contacts are provided by Thr197, Ser198, and Asn222.

The protein belongs to the sirtuin family. Class U subfamily. It depends on Zn(2+) as a cofactor.

It is found in the cytoplasm. The catalysed reaction is N(6)-acetyl-L-lysyl-[protein] + NAD(+) + H2O = 2''-O-acetyl-ADP-D-ribose + nicotinamide + L-lysyl-[protein]. In terms of biological role, NAD-dependent protein deacetylase which modulates the activities of several enzymes which are inactive in their acetylated form. The protein is NAD-dependent protein deacetylase of Thermodesulfovibrio yellowstonii (strain ATCC 51303 / DSM 11347 / YP87).